We begin with the raw amino-acid sequence, 144 residues long: MNKVVLIGRLTKDPELKFTPGTGTAVASFTLAVDRRFKKEGQQEADFIPIVVWGKQAESTANYMSKGKLMGVSGRIQTRSYDAKDGTRRYVTEIVAEEVQFLEWGSSNNNSMANDQFNNGNENGSMQLPDNNDITPIDDGDIPF.

Residues 1–103 (MNKVVLIGRL…IVAEEVQFLE (103 aa)) enclose the SSB domain. The segment covering 112-134 (MANDQFNNGNENGSMQLPDNNDI) has biased composition (polar residues). Residues 112-144 (MANDQFNNGNENGSMQLPDNNDITPIDDGDIPF) form a disordered region.

As to quaternary structure, homotetramer.

The polypeptide is Single-stranded DNA-binding protein 3 (ssb3) (Clostridium acetobutylicum (strain ATCC 824 / DSM 792 / JCM 1419 / IAM 19013 / LMG 5710 / NBRC 13948 / NRRL B-527 / VKM B-1787 / 2291 / W)).